The following is a 625-amino-acid chain: DNA mismatch repair protein MutL (625 aa).

The protein belongs to the DNA mismatch repair MutL/HexB family.

Its function is as follows. This protein is involved in the repair of mismatches in DNA. It is required for dam-dependent methyl-directed DNA mismatch repair. May act as a 'molecular matchmaker', a protein that promotes the formation of a stable complex between two or more DNA-binding proteins in an ATP-dependent manner without itself being part of a final effector complex. This Azorhizobium caulinodans (strain ATCC 43989 / DSM 5975 / JCM 20966 / LMG 6465 / NBRC 14845 / NCIMB 13405 / ORS 571) protein is DNA mismatch repair protein MutL.